We begin with the raw amino-acid sequence, 65 residues long: Large ribosomal subunit protein uL29 (65 aa).

Belongs to the universal ribosomal protein uL29 family.

In Bacteroides fragilis (strain ATCC 25285 / DSM 2151 / CCUG 4856 / JCM 11019 / LMG 10263 / NCTC 9343 / Onslow / VPI 2553 / EN-2), this protein is Large ribosomal subunit protein uL29.